The primary structure comprises 307 residues: Pseudouridine-5'-phosphate glycosidase (307 aa).

Glutamate 26 acts as the Proton donor in catalysis. Positions 88 and 108 each coordinate substrate. Aspartate 140 lines the Mn(2+) pocket. Position 142-144 (142-144 (SAD)) interacts with substrate. Catalysis depends on lysine 161, which acts as the Nucleophile.

Belongs to the pseudouridine-5'-phosphate glycosidase family. In terms of assembly, homotrimer. It depends on Mn(2+) as a cofactor.

It catalyses the reaction D-ribose 5-phosphate + uracil = psi-UMP + H2O. Catalyzes the reversible cleavage of pseudouridine 5'-phosphate (PsiMP) to ribose 5-phosphate and uracil. Functions biologically in the cleavage direction, as part of a pseudouridine degradation pathway. This Clostridium botulinum (strain Langeland / NCTC 10281 / Type F) protein is Pseudouridine-5'-phosphate glycosidase.